We begin with the raw amino-acid sequence, 347 residues long: Endothelin receptor type B (347 aa).

Over glutamate 1–lysine 7 the chain is Extracellular. Residues tyrosine 8–isoleucine 32 traverse the membrane as a helical segment. Topologically, residues tyrosine 33–asparagine 43 are cytoplasmic. A helical membrane pass occupies residues isoleucine 44–leucine 69. Over alanine 70–lysine 81 the chain is Extracellular. Cysteine 80 and cysteine 161 are disulfide-bonded. A helical transmembrane segment spans residues leucine 82 to isoleucine 103. The Cytoplasmic portion of the chain corresponds to aspartate 104–threonine 124. A helical membrane pass occupies residues alanine 125 to isoleucine 149. Over threonine 150–glutamine 177 the chain is Extracellular. Residues alanine 178 to methionine 202 traverse the membrane as a helical segment. The Cytoplasmic portion of the chain corresponds to threonine 203–threonine 230. Residues valine 231–tyrosine 256 form a helical membrane-spanning segment. At aspartate 257–serine 268 the chain is on the extracellular side. A helical membrane pass occupies residues phenylalanine 269–valine 295. Residues serine 296–serine 347 are Cytoplasmic-facing. 2 S-palmitoyl cysteine lipidation sites follow: cysteine 309 and cysteine 311.

This sequence belongs to the G-protein coupled receptor 1 family. Endothelin receptor subfamily. EDNRB sub-subfamily.

It is found in the cell membrane. Functionally, non-specific receptor for endothelin 1, 2, and 3. Mediates its action by association with G proteins that activate a phosphatidylinositol-calcium second messenger system. This is Endothelin receptor type B (EDNRB) from Coturnix japonica (Japanese quail).